The sequence spans 299 residues: Pectin lyase (299 aa).

A signal peptide spans 1–18 (MKFSTFVSLGLTAITALA). Low complexity-rich tracts occupy residues 82–91 (RSAATSPSSD) and 232–246 (SASA…TTRT). Disordered regions lie at residues 82–105 (RSAA…PSPS) and 227–246 (SRGR…TTRT).

Belongs to the polysaccharide lyase 1 family.

Its subcellular location is the secreted. The catalysed reaction is Eliminative cleavage of (1-&gt;4)-alpha-D-galacturonan methyl ester to give oligosaccharides with 4-deoxy-6-O-methyl-alpha-D-galact-4-enuronosyl groups at their non-reducing ends.. The protein is Pectin lyase (PELA) of Peyronellaea pinodes (Pea foot rot fungus).